A 203-amino-acid polypeptide reads, in one-letter code: Holliday junction branch migration complex subunit RuvA (203 aa).

The domain I stretch occupies residues 1-64 (MIGRLRGIIL…EDAQLLYGFN (64 aa)). Residues 65–142 (NKQERTLFKE…KGLHGDLFTP (78 aa)) form a domain II region. The segment at 143–154 (AADLVLTSPASP) is flexible linker. Residues 155–203 (ATDDAEQEAVAALVALGYKPQEASRMVSKIARPDASSETLIREALRAAL) form a domain III region.

It belongs to the RuvA family. In terms of assembly, homotetramer. Forms an RuvA(8)-RuvB(12)-Holliday junction (HJ) complex. HJ DNA is sandwiched between 2 RuvA tetramers; dsDNA enters through RuvA and exits via RuvB. An RuvB hexamer assembles on each DNA strand where it exits the tetramer. Each RuvB hexamer is contacted by two RuvA subunits (via domain III) on 2 adjacent RuvB subunits; this complex drives branch migration. In the full resolvosome a probable DNA-RuvA(4)-RuvB(12)-RuvC(2) complex forms which resolves the HJ.

It is found in the cytoplasm. Functionally, the RuvA-RuvB-RuvC complex processes Holliday junction (HJ) DNA during genetic recombination and DNA repair, while the RuvA-RuvB complex plays an important role in the rescue of blocked DNA replication forks via replication fork reversal (RFR). RuvA specifically binds to HJ cruciform DNA, conferring on it an open structure. The RuvB hexamer acts as an ATP-dependent pump, pulling dsDNA into and through the RuvAB complex. HJ branch migration allows RuvC to scan DNA until it finds its consensus sequence, where it cleaves and resolves the cruciform DNA. The sequence is that of Holliday junction branch migration complex subunit RuvA from Citrobacter koseri (strain ATCC BAA-895 / CDC 4225-83 / SGSC4696).